A 283-amino-acid polypeptide reads, in one-letter code: ATP synthase gamma chain (283 aa).

This sequence belongs to the ATPase gamma chain family. In terms of assembly, F-type ATPases have 2 components, CF(1) - the catalytic core - and CF(0) - the membrane proton channel. CF(1) has five subunits: alpha(3), beta(3), gamma(1), delta(1), epsilon(1). CF(0) has three main subunits: a, b and c.

It localises to the cell membrane. Its function is as follows. Produces ATP from ADP in the presence of a proton gradient across the membrane. The gamma chain is believed to be important in regulating ATPase activity and the flow of protons through the CF(0) complex. In Clostridium kluyveri (strain NBRC 12016), this protein is ATP synthase gamma chain.